A 221-amino-acid polypeptide reads, in one-letter code: Ribosomal RNA large subunit methyltransferase E (221 aa).

The S-adenosyl-L-methionine site is built by G60, W62, D89, D105, and D134. K174 serves as the catalytic Proton acceptor.

The protein belongs to the class I-like SAM-binding methyltransferase superfamily. RNA methyltransferase RlmE family.

Its subcellular location is the cytoplasm. It carries out the reaction uridine(2552) in 23S rRNA + S-adenosyl-L-methionine = 2'-O-methyluridine(2552) in 23S rRNA + S-adenosyl-L-homocysteine + H(+). In terms of biological role, specifically methylates the uridine in position 2552 of 23S rRNA at the 2'-O position of the ribose in the fully assembled 50S ribosomal subunit. This Cupriavidus necator (strain ATCC 17699 / DSM 428 / KCTC 22496 / NCIMB 10442 / H16 / Stanier 337) (Ralstonia eutropha) protein is Ribosomal RNA large subunit methyltransferase E.